The sequence spans 355 residues: NADH dehydrogenase [ubiquinone] 1 alpha subcomplex subunit 10, mitochondrial (355 aa).

Residues 1-35 constitute a mitochondrion transit peptide; sequence MALRLLKLAATSASARVVAAGAQRVRGIHSSVQCK. Ser-250 is subject to Phosphoserine; by PINK1. Lys-285 carries the post-translational modification N6-succinyllysine.

Belongs to the complex I NDUFA10 subunit family. In terms of assembly, complex I is composed of 45 different subunits. This a component of the hydrophobic protein fraction. FAD is required as a cofactor. In terms of processing, phosphorylation at Ser-250 by PINK1 is required for the binding and/or reduction of the complex I substrate ubiquinone.

It localises to the mitochondrion matrix. Its function is as follows. Accessory subunit of the mitochondrial membrane respiratory chain NADH dehydrogenase (Complex I), that is believed not to be involved in catalysis. Complex I functions in the transfer of electrons from NADH to the respiratory chain. The immediate electron acceptor for the enzyme is believed to be ubiquinone. The polypeptide is NADH dehydrogenase [ubiquinone] 1 alpha subcomplex subunit 10, mitochondrial (NDUFA10) (Homo sapiens (Human)).